A 145-amino-acid polypeptide reads, in one-letter code: Ribonuclease H (145 aa).

In terms of domain architecture, RNase H type-1 spans 1–142; the sequence is MDTPVYLYTD…ADDLANRGAA (142 aa). Residues D10, E48, D70, and D134 each contribute to the Mg(2+) site.

Belongs to the RNase H family. As to quaternary structure, monomer. Requires Mg(2+) as cofactor.

The protein localises to the cytoplasm. It carries out the reaction Endonucleolytic cleavage to 5'-phosphomonoester.. Its function is as follows. Endonuclease that specifically degrades the RNA of RNA-DNA hybrids. The protein is Ribonuclease H of Neisseria meningitidis serogroup C / serotype 2a (strain ATCC 700532 / DSM 15464 / FAM18).